The primary structure comprises 241 residues: Accessory protein p30II (241 aa).

2 short sequence motifs (nuclear localization signal) span residues 73–78 (RRCRSR) and 91–98 (GPRRSRPR). Residues 86–153 (AFPPGGPRRS…HRNSPTDTKL (68 aa)) form a disordered region. Residues 107-138 (PSSTVSSSSLSFNSSSKDNSPSTNSSTSRSSG) show a composition bias toward low complexity. Positions 175–184 (LRVWRLCTRR) match the Mitochondrial targeting signal motif.

It belongs to the HTLV-1 accessory protein p30II family. In terms of assembly, p30II binds to the KIX domains of CREBBP and EP300.

The protein localises to the host nucleus. Its subcellular location is the host nucleolus. It is found in the host mitochondrion inner membrane. In terms of biological role, p30II is a multifunctional regulator that sequesters EP300/CREBBP and down-regulates CREB-responsive element (CRE) and Tax-responsive element (TRE) mediated transcription. Specifically binds and represses tax/rex mRNA nuclear export. Since Tax and Rex are positive regulators of viral gene expression, their inhibition by p30II reduces virion production, and allows the virus to escape the host immune surveillance and persist latently in an immune-competent host. Functionally, p13II increases mitochondrial permeability to monovalent cations, producing a rapid, membrane potential-dependent influx of potassium. This could involve a channel-forming activity. Interferes with cell proliferation and transformation and promotes apoptosis induced by ceramide and Fas ligand, probably using the Ras signaling. This chain is Accessory protein p30II, found in Human T-cell leukemia virus 1 (isolate Caribbea HS-35 subtype A) (HTLV-1).